A 404-amino-acid chain; its full sequence is Cysteine desulfurase IscS (404 aa).

Pyridoxal 5'-phosphate is bound by residues 75-76, asparagine 155, glutamine 183, and 203-205; these read AT and SAH. Position 206 is an N6-(pyridoxal phosphate)lysine (lysine 206). Position 243 (threonine 243) interacts with pyridoxal 5'-phosphate. Cysteine 328 serves as the catalytic Cysteine persulfide intermediate. Cysteine 328 contacts [2Fe-2S] cluster.

The protein belongs to the class-V pyridoxal-phosphate-dependent aminotransferase family. NifS/IscS subfamily. In terms of assembly, homodimer. Forms a heterotetramer with IscU, probably interacts with other sulfur acceptors. Pyridoxal 5'-phosphate is required as a cofactor.

It localises to the cytoplasm. The catalysed reaction is (sulfur carrier)-H + L-cysteine = (sulfur carrier)-SH + L-alanine. It functions in the pathway cofactor biosynthesis; iron-sulfur cluster biosynthesis. With respect to regulation, inhibited by equimolar N-iodoacetyl-N'-(5-sulfo-1-naphthyl)ethylenediamine. In terms of biological role, master enzyme that delivers sulfur to a number of partners involved in Fe-S cluster assembly, tRNA modification or cofactor biosynthesis. Catalyzes the removal of elemental sulfur from cysteine to produce alanine via an enzyme-bound persulfide intermediate. Functions as a sulfur delivery protein for Fe-S cluster synthesis. Cluster assembly on IscU homodimers proceeds sequentially from 1 2Fe-2S per dimer, to 2 2Fe-2S per dimer and finally 1 4Fe-4S per dimer. This Azotobacter vinelandii protein is Cysteine desulfurase IscS.